Here is a 223-residue protein sequence, read N- to C-terminus: Uracil phosphoribosyltransferase (223 aa).

Residues Arg86, Arg111, and 145 to 153 contribute to the 5-phospho-alpha-D-ribose 1-diphosphate site; that span reads DPILATGST. Residues Ile209 and 214–216 contribute to the uracil site; that span reads GDA. 5-phospho-alpha-D-ribose 1-diphosphate is bound at residue Asp215.

Belongs to the UPRTase family. It depends on Mg(2+) as a cofactor.

The catalysed reaction is UMP + diphosphate = 5-phospho-alpha-D-ribose 1-diphosphate + uracil. It participates in pyrimidine metabolism; UMP biosynthesis via salvage pathway; UMP from uracil: step 1/1. Allosterically activated by GTP. Functionally, catalyzes the conversion of uracil and 5-phospho-alpha-D-ribose 1-diphosphate (PRPP) to UMP and diphosphate. The sequence is that of Uracil phosphoribosyltransferase from Natronomonas pharaonis (strain ATCC 35678 / DSM 2160 / CIP 103997 / JCM 8858 / NBRC 14720 / NCIMB 2260 / Gabara) (Halobacterium pharaonis).